We begin with the raw amino-acid sequence, 339 residues long: Aspartate carbamoyltransferase catalytic subunit (339 aa).

Arg-60 and Thr-61 together coordinate carbamoyl phosphate. Residue Lys-88 coordinates L-aspartate. Carbamoyl phosphate is bound by residues Arg-110, His-143, and Gln-146. L-aspartate contacts are provided by Arg-183 and Arg-254. Carbamoyl phosphate-binding residues include Gly-295 and Pro-296.

It belongs to the aspartate/ornithine carbamoyltransferase superfamily. ATCase family. In terms of assembly, heterododecamer (2C3:3R2) of six catalytic PyrB chains organized as two trimers (C3), and six regulatory PyrI chains organized as three dimers (R2).

The catalysed reaction is carbamoyl phosphate + L-aspartate = N-carbamoyl-L-aspartate + phosphate + H(+). It functions in the pathway pyrimidine metabolism; UMP biosynthesis via de novo pathway; (S)-dihydroorotate from bicarbonate: step 2/3. In terms of biological role, catalyzes the condensation of carbamoyl phosphate and aspartate to form carbamoyl aspartate and inorganic phosphate, the committed step in the de novo pyrimidine nucleotide biosynthesis pathway. The protein is Aspartate carbamoyltransferase catalytic subunit of Prochlorococcus marinus (strain MIT 9312).